Consider the following 512-residue polypeptide: N-fatty-acyl-amino acid synthase/hydrolase PM20D1 (512 aa).

The N-terminal stretch at 1–34 (MAVSRWKAVGSTLLAAFLVGLVVLIAVLLIRTYT) is a signal peptide. N-linked (GlcNAc...) asparagine glycans are attached at residues Asn-45 and Asn-81. His-134 is a Zn(2+) binding site. Residue Asp-136 is part of the active site. Asp-166 serves as a coordination point for Zn(2+). The active-site Proton acceptor is the Glu-200. 2 residues coordinate Zn(2+): Glu-201 and Asp-227. N-linked (GlcNAc...) asparagine glycosylation is present at Asn-450. His-472 contributes to the Zn(2+) binding site.

It belongs to the peptidase M20A family.

Its subcellular location is the secreted. The enzyme catalyses an N-acyl-L-amino acid + H2O = an L-alpha-amino acid + a carboxylate. It carries out the reaction an N-acyl-aromatic L-alpha-amino acid + H2O = an aromatic L-alpha-amino acid + a carboxylate. The catalysed reaction is N-(5Z,8Z,11Z,14Z)-eicosatetraenoyl-glycine + H2O = (5Z,8Z,11Z,14Z)-eicosatetraenoate + glycine. It catalyses the reaction N-hexadecanoyl-L-phenylalanine + H2O = hexadecanoate + L-phenylalanine. The enzyme catalyses N-octadecanoyl-L-phenylalanine + H2O = octadecanoate + L-phenylalanine. It carries out the reaction N-(4Z,7Z,10Z,13Z,16Z,19Z-docosahexaenoyl)-L-phenylalanine + H2O = (4Z,7Z,10Z,13Z,16Z,19Z)-docosahexaenoate + L-phenylalanine. The catalysed reaction is N-(9Z-octadecenoyl)-L-asparagine + H2O = L-asparagine + (9Z)-octadecenoate. It catalyses the reaction (9Z)-octadecenoate + glycine = N-(9Z-octadecenoyl)glycine + H2O. The enzyme catalyses N-(9Z-octadecenoyl)-L-lysine + H2O = L-lysine + (9Z)-octadecenoate. It carries out the reaction N-(9Z-octadecenoyl)-L-methionine + H2O = (9Z)-octadecenoate + L-methionine. The catalysed reaction is N-(9Z-octadecenoyl)-L-serine + H2O = L-serine + (9Z)-octadecenoate. It catalyses the reaction N-(9Z-octadecenoyl)-L-tryptophan + H2O = L-tryptophan + (9Z)-octadecenoate. The enzyme catalyses N-(9Z-octadecenoyl)-L-tyrosine + H2O = L-tyrosine + (9Z)-octadecenoate. It carries out the reaction N-(9Z-octadecenoyl)-L-glutamine + H2O = L-glutamine + (9Z)-octadecenoate. The catalysed reaction is N-(5Z,8Z,11Z,14Z-eicosatetraenoyl)-L-serine + H2O = (5Z,8Z,11Z,14Z)-eicosatetraenoate + L-serine. It catalyses the reaction (5Z,8Z,11Z,14Z)-eicosatetraenoate + L-phenylalanine = N-(5Z,8Z,11Z,14Z-eicosatetraenoyl)-L-phenylalanine + H2O. The enzyme catalyses N-(9Z-octadecenoyl)-L-leucine + H2O = L-leucine + (9Z)-octadecenoate. It carries out the reaction L-phenylalanine + (9Z)-octadecenoate = N-(9Z-octadecenoyl)-L-phenylalanine + H2O. The protein operates within amino-acid metabolism. It functions in the pathway energy metabolism; electron transfer. Its pathway is lipid metabolism; fatty acid metabolism. Lipoproteins are powerful coactivators of PM20D1 activity in vitro and NAA biosynthesis in vivo. Functionally, secreted enzyme that regulates the endogenous N-fatty acyl amino acid (NAAs) tissue and circulating levels by functioning as a bidirectional NAA synthase/hydrolase. It condenses free fatty acids and free amino acids to generate NAAs and bidirectionally catalyzes the reverse hydrolysis reaction. Some of these NAAs stimulate oxidative metabolism via mitochondrial uncoupling, increasing energy expenditure in a UPC1-independent manner. Thereby, this secreted protein may indirectly regulate whole body energy expenditure. PM20D1 circulates in tight association with both low- and high-density (LDL and HDL,respectively) lipoprotein particles. The protein is N-fatty-acyl-amino acid synthase/hydrolase PM20D1 of Xenopus tropicalis (Western clawed frog).